Here is a 113-residue protein sequence, read N- to C-terminus: Ribulose bisphosphate carboxylase small subunit (113 aa).

The protein belongs to the RuBisCO small chain family. In terms of assembly, heterohexadecamer of 8 large and 8 small subunits.

It is found in the carboxysome. Functionally, ruBisCO catalyzes two reactions: the carboxylation of D-ribulose 1,5-bisphosphate, the primary event in carbon dioxide fixation, as well as the oxidative fragmentation of the pentose substrate in the photorespiration process. Both reactions occur simultaneously and in competition at the same active site. Although the small subunit is not catalytic it is essential for maximal activity. This Synechococcus sp. (strain WH7803) protein is Ribulose bisphosphate carboxylase small subunit.